Reading from the N-terminus, the 75-residue chain is Small ribosomal subunit protein bS18 (75 aa).

This sequence belongs to the bacterial ribosomal protein bS18 family. Part of the 30S ribosomal subunit. Forms a tight heterodimer with protein bS6.

Functionally, binds as a heterodimer with protein bS6 to the central domain of the 16S rRNA, where it helps stabilize the platform of the 30S subunit. The chain is Small ribosomal subunit protein bS18 from Dinoroseobacter shibae (strain DSM 16493 / NCIMB 14021 / DFL 12).